Consider the following 2641-residue polypeptide: CCR4-NOT transcription complex subunit let-711 (2641 aa).

The LXXLL motif lies at 660 to 664; the sequence is LSELL. 5 disordered regions span residues 771-887, 936-963, 1197-1221, 1518-1565, and 2034-2054; these read SGRS…QNAQ, TQRQNSNSGWHAAPAPQRPSGPPTPQQQ, EGGRHTPVGSAQAGSASSTPTPAAA, QSKI…SQGA, and GMNNAMNNGAGNAAHHHAGLQ. Low complexity-rich tracts occupy residues 774–795, 802–839, and 853–877; these read SSSVSSGGHVQQSSGSQPQQQQ, LPPSGVVPVQQQPQQPPSLQQQHSQQSLPTPPTTSQQQ, and PAQFAPQPMFPPQAQAQHQHQHMMG. The segment covering 951–960 has biased composition (pro residues); it reads PQRPSGPPTP. A compositionally biased stretch (low complexity) spans 1205–1221; that stretch reads GSAQAGSASSTPTPAAA. Low complexity predominate over residues 2034–2046; the sequence is GMNNAMNNGAGNA. The LXXLL signature appears at 2341-2345; that stretch reads LRVLL. The tract at residues 2609–2641 is disordered; that stretch reads AQGSQPQAQPDGAPGPLGNNTGAANQQQNPNTN.

Belongs to the CNOT1 family. In terms of assembly, component of the CCR4-NOT complex at least composed of ccf-1, ccr-4 and let-711, which is required for germ cell development in hermaphrodites. Within the complex interacts with ccf-1 and ccr-4; the interactions are direct. In terms of tissue distribution, highly expressed in the germline of hermaphrodites.

The protein localises to the nucleus. Functionally, scaffolding component of the CCR4-NOT complex which is one of the major cellular mRNA deadenylases and is linked to various cellular processes including bulk mRNA degradation, miRNA-mediated repression, translational repression during translational initiation and general transcription regulation. Positively regulates the accumulation of the CCR4-NOT complex component ccr-1. Within the complex promotes germ cell development and fertility in hermaphrodites. Additional complex functions may be a consequence of its influence on mRNA expression. Its scaffolding function implies its interaction with the catalytic complex module and diverse RNA-binding proteins mediating the complex recruitment to selected mRNA 3'UTRs. Mediates the recruitment of the CCR4-NOT complex to miRNA targets and to the RISC complex. Acts as a transcriptional repressor. Represses the ligand-dependent transcriptional activation by nuclear receptors. In embryos, plays a role in female pronucleus and mitotic spindle positioning during the first cleavage divisions after fertilization. This may partly be through negatively regulating the accumulation of zyg-9 at the centrosome. Negatively regulates the formation of long astral microtubules in developing embryos. Required for the stabilization and degradation of maternal mRNAs such as nos-2 in somatic blastomeres. This Caenorhabditis elegans protein is CCR4-NOT transcription complex subunit let-711.